The chain runs to 323 residues: HPr kinase/phosphorylase (323 aa).

Catalysis depends on residues His-146 and Lys-167. ATP is bound at residue 161–168 (GESGLGKS). Ser-168 is a binding site for Mg(2+). Asp-185 acts as the Proton acceptor; for phosphorylation activity. Proton donor; for dephosphorylation activity in catalysis. Positions 209–218 (LEVRGLGLLD) are important for the catalytic mechanism of both phosphorylation and dephosphorylation. Glu-210 contributes to the Mg(2+) binding site. The active site involves Arg-250. Residues 271-276 (QVAAGR) are important for the catalytic mechanism of dephosphorylation.

It belongs to the HPrK/P family. As to quaternary structure, homohexamer. Requires Mg(2+) as cofactor.

The catalysed reaction is [HPr protein]-L-serine + ATP = [HPr protein]-O-phospho-L-serine + ADP + H(+). The enzyme catalyses [HPr protein]-O-phospho-L-serine + phosphate + H(+) = [HPr protein]-L-serine + diphosphate. Its function is as follows. Catalyzes the ATP- as well as the pyrophosphate-dependent phosphorylation of a specific serine residue in HPr, a phosphocarrier protein of the phosphoenolpyruvate-dependent sugar phosphotransferase system (PTS). HprK/P also catalyzes the pyrophosphate-producing, inorganic phosphate-dependent dephosphorylation (phosphorolysis) of seryl-phosphorylated HPr (P-Ser-HPr). The sequence is that of HPr kinase/phosphorylase from Cupriavidus pinatubonensis (strain JMP 134 / LMG 1197) (Cupriavidus necator (strain JMP 134)).